We begin with the raw amino-acid sequence, 813 residues long: MAKKKSKSKSSSPKPKVSSTAAKPVEIDNQQNIENVQDSPSALQQQSATAEESENTATTATPSEGTTATTESSPVTTSNETDPIELSVLDNADHAIDSNSIKSTEAVLETLDSELNTIADTKTEPPTEQELNPTLAKYMRSCQEGNLTIVKELISSGQVLVNDTFSDEITGLHWACINNRLSLVKFLIANGANPNQLGGELKASPLHWACRNGLVYIVDYLMRNSDADPNLRDAQTYNALHLAVHSSNIMLVIYLLLSCCSTDSVKKVYIDEPDGSNRTALHWASYQNDIFTINALLRFGADVSKVDNSLFIPLHWAFMKGYKSVLKALVEAGSDIYFKNDQNKNSFDIAKDMNCSNTWEKVLIETGRDPKNNWAPLKPWVSAKLGKIITFLTPYFLLPLSFNVLSMGGDQGGFIIPKLILAIGILGGGIYLLNKLIISQYIFDDKKLAKSPILAGVFSATAFWSVLVWLYNILPTTFIHNFFANVIMAILIAIFTWSFFKAMFINPGFVPTPADNNVILSQVAQLIELGKFDTDHFCVNSFVRKPLRSRYSKHNKRLIARFDHSCPWVYNDIGVRNHKIFITFVYSLNMAIFVFLYLSLQYFDKVKDQYDSDDEGEGEGFVCSILGDDMCYGYKNHHFHFNVFMWDLFQCVWVSFLCIVQTFQILKGLTTWEFSSLNKQLQTNRFNHSTVPRDFEAGEGISLDQTQPSDGQHRHNHNEFQTCMNLLGIDQFILTLKMSLKSLFSNTRHGNNNTNYDPLTSLHIPTDHGIKQNWLDFWIIGEEKWRNVFYLPIDGENNLNGKVVDYYTLYSYH.

The tract at residues Met-1 to Pro-83 is disordered. Topologically, residues Met-1–Lys-387 are cytoplasmic. A compositionally biased stretch (low complexity) spans Lys-9–Pro-24. Residues Asp-28–Gln-46 show a composition bias toward polar residues. The span at Ser-47–Ser-78 shows a compositional bias: low complexity. ANK repeat units lie at residues Pro-133 to Asn-162, Asp-167 to Gln-196, Leu-201 to Leu-231, Gln-235 to Ser-264, Ser-276 to Lys-305, and Ser-309 to Phe-338. Residues Ile-388–Gly-408 form a helical membrane-spanning segment. The Lumenal portion of the chain corresponds to Gly-409–Gly-412. Residues Gly-413 to Leu-433 traverse the membrane as a helical segment. At Asn-434–Pro-452 the chain is on the cytoplasmic side. The helical transmembrane segment at Ile-453–Ile-473 threads the bilayer. Residues Leu-474–Asn-485 are Lumenal-facing. A helical membrane pass occupies residues Val-486–Asn-506. Residues Pro-507–Lys-579 lie on the Cytoplasmic side of the membrane. One can recognise a DHHC domain in the interval His-536 to Tyr-586. Cys-566 (S-palmitoyl cysteine intermediate) is an active-site residue. The chain crosses the membrane as a helical span at residues Ile-580–Leu-600. The Lumenal portion of the chain corresponds to Gln-601–Asn-642. Residues Val-643–Phe-663 form a helical membrane-spanning segment. At Gln-664 to His-813 the chain is on the cytoplasmic side.

Belongs to the DHHC palmitoyltransferase family. AKR/ZDHHC17 subfamily.

The protein resides in the early endosome membrane. It is found in the golgi apparatus membrane. The catalysed reaction is L-cysteinyl-[protein] + hexadecanoyl-CoA = S-hexadecanoyl-L-cysteinyl-[protein] + CoA. Functionally, palmitoyltransferase specific for casein kinase 1. This chain is Palmitoyltransferase AKR1 (AKR1), found in Candida albicans (strain SC5314 / ATCC MYA-2876) (Yeast).